We begin with the raw amino-acid sequence, 513 residues long: Xyloglucan 6-xylosyltransferase 4 (513 aa).

Topologically, residues 1–39 are cytoplasmic; sequence MFQDGSRSSGSGRGLSTTAVSNGGWRTRGFLRGWQIQNT. A helical; Signal-anchor for type II membrane protein transmembrane segment spans residues 40–60; the sequence is LFNNIKFMILCCFVTILILLG. Residues 61 to 513 are Lumenal-facing; sequence TIRVGNLGSS…IRRMHMETKP (453 aa). Residues N76, N110, N142, N174, and N490 are each glycosylated (N-linked (GlcNAc...) asparagine).

This sequence belongs to the glycosyltransferase 34 family.

Its subcellular location is the golgi apparatus membrane. It carries out the reaction Transfers an alpha-D-xylosyl residue from UDP-D-xylose to a glucose residue in xyloglucan, forming an alpha-(1-&gt;6)-D-xylosyl-D-glucose linkage.. Xylosyltransferase specific to UDP-D-xylose that accepts cellohexaose as substrate to produce xyloglucan. This is Xyloglucan 6-xylosyltransferase 4 from Arabidopsis thaliana (Mouse-ear cress).